We begin with the raw amino-acid sequence, 344 residues long: GTPase Obg (344 aa).

The 159-residue stretch at 1 to 159 (MKFLDLAKVY…RTIWLRLKLI (159 aa)) folds into the Obg domain. Residues 160–327 (ADVGLLGLPN…VLRALRARID (168 aa)) form the OBG-type G domain. GTP-binding positions include 166–173 (GLPNAGKS), 191–195 (FTTLH), 212–215 (DIPG), 279–282 (NKID), and 308–310 (SGA). Ser173 and Thr193 together coordinate Mg(2+).

It belongs to the TRAFAC class OBG-HflX-like GTPase superfamily. OBG GTPase family. In terms of assembly, monomer. Requires Mg(2+) as cofactor.

It localises to the cytoplasm. In terms of biological role, an essential GTPase which binds GTP, GDP and possibly (p)ppGpp with moderate affinity, with high nucleotide exchange rates and a fairly low GTP hydrolysis rate. Plays a role in control of the cell cycle, stress response, ribosome biogenesis and in those bacteria that undergo differentiation, in morphogenesis control. In Ruegeria pomeroyi (strain ATCC 700808 / DSM 15171 / DSS-3) (Silicibacter pomeroyi), this protein is GTPase Obg.